A 182-amino-acid chain; its full sequence is Ribosome hibernation promotion factor (182 aa).

Belongs to the HPF/YfiA ribosome-associated protein family. Long HPF subfamily. Interacts with 100S ribosomes.

It is found in the cytoplasm. Functionally, required for dimerization of active 70S ribosomes into 100S ribosomes in stationary phase; 100S ribosomes are translationally inactive and sometimes present during exponential growth. In Streptococcus pyogenes serotype M6 (strain ATCC BAA-946 / MGAS10394), this protein is Ribosome hibernation promotion factor.